The sequence spans 279 residues: Tryptophan synthase alpha chain (279 aa).

Active-site proton acceptor residues include Glu50 and Asp61.

Belongs to the TrpA family. Tetramer of two alpha and two beta chains.

The catalysed reaction is (1S,2R)-1-C-(indol-3-yl)glycerol 3-phosphate + L-serine = D-glyceraldehyde 3-phosphate + L-tryptophan + H2O. It participates in amino-acid biosynthesis; L-tryptophan biosynthesis; L-tryptophan from chorismate: step 5/5. The alpha subunit is responsible for the aldol cleavage of indoleglycerol phosphate to indole and glyceraldehyde 3-phosphate. In Mesorhizobium japonicum (strain LMG 29417 / CECT 9101 / MAFF 303099) (Mesorhizobium loti (strain MAFF 303099)), this protein is Tryptophan synthase alpha chain.